The sequence spans 101 residues: Apolipoprotein C-II (101 aa).

Residues 1-22 (MGTRCLLVLLLVLLVLRCDVQG) form the signal peptide. A propeptide spans 23–28 (DDMARQ) (removed in mature form). The tract at residues 66-74 (AVDEKIRDM) is lipid binding. The lipoprotein lipase cofactor stretch occupies residues 78–101 (STAAVRIYTGILTDQILSMLSGDS).

This sequence belongs to the apolipoprotein C2 family. Proapolipoprotein C-II is synthesized as a sialic acid containing glycoprotein which is subsequently desialylated prior to its proteolytic processing. In terms of processing, proapolipoprotein C-II, the major form found in plasma undergoes proteolytic cleavage of its N-terminal hexapeptide to generate the mature form apolipoprotein C-II, which occurs as the minor form in plasma.

It localises to the secreted. Functionally, component of chylomicrons, very low-density lipoproteins (VLDL), low-density lipoproteins (LDL), and high-density lipoproteins (HDL) in plasma. Plays an important role in lipoprotein metabolism as an activator of lipoprotein lipase, the enzyme which hydrolyzes the triacylglycerols on chylomicrons and VLDL. The sequence is that of Apolipoprotein C-II (APOC2) from Acinonyx jubatus (Cheetah).